The sequence spans 119 residues: Large ribosomal subunit protein uL18 (119 aa).

This sequence belongs to the universal ribosomal protein uL18 family. In terms of assembly, part of the 50S ribosomal subunit; part of the 5S rRNA/L5/L18/L25 subcomplex. Contacts the 5S and 23S rRNAs.

In terms of biological role, this is one of the proteins that bind and probably mediate the attachment of the 5S RNA into the large ribosomal subunit, where it forms part of the central protuberance. The chain is Large ribosomal subunit protein uL18 from Anaeromyxobacter sp. (strain Fw109-5).